Reading from the N-terminus, the 177-residue chain is ATP synthase subunit delta (177 aa).

Belongs to the ATPase delta chain family. As to quaternary structure, F-type ATPases have 2 components, F(1) - the catalytic core - and F(0) - the membrane proton channel. F(1) has five subunits: alpha(3), beta(3), gamma(1), delta(1), epsilon(1). F(0) has three main subunits: a(1), b(2) and c(10-14). The alpha and beta chains form an alternating ring which encloses part of the gamma chain. F(1) is attached to F(0) by a central stalk formed by the gamma and epsilon chains, while a peripheral stalk is formed by the delta and b chains.

It is found in the cell membrane. In terms of biological role, f(1)F(0) ATP synthase produces ATP from ADP in the presence of a proton or sodium gradient. F-type ATPases consist of two structural domains, F(1) containing the extramembraneous catalytic core and F(0) containing the membrane proton channel, linked together by a central stalk and a peripheral stalk. During catalysis, ATP synthesis in the catalytic domain of F(1) is coupled via a rotary mechanism of the central stalk subunits to proton translocation. Functionally, this protein is part of the stalk that links CF(0) to CF(1). It either transmits conformational changes from CF(0) to CF(1) or is implicated in proton conduction. This is ATP synthase subunit delta from Exiguobacterium sibiricum (strain DSM 17290 / CCUG 55495 / CIP 109462 / JCM 13490 / 255-15).